Consider the following 768-residue polypeptide: MHSDITPIHTHKKYWAECFGTAPFLPTSRKEMDALGWDSCDIVLVTGDAYVDHPSFGMAIIGRLLEAQGFRVGIIAQPQWQDKTDFMSLGKPNLFFGVTSGNMDSMINRYTSDRKLRHDDAYTPNNEGGKRPDRATLVYSQRCREAYKDVPIVLGGIEASLRRVAHYDYWSDKVRRSVLLDAKADILLFGNAERALVEVAHRLAEGEEIAQMTNIRGTAVNLAAEPEGYTIIDSSRIEKPRKEAFIPPNPYEVETQCETKSEEPKAQPITIRPSRHDAATTAVRLPSFEKLQNDRILYAHASRILHLETNPYSGRALIQRHGNRELWVNQAPIPLTTEEMDYVFGLPYARVPHPKYGKAKIPAYDMIKTSVNIMRGCFGGCSFCSITEHEGRIIQNRSQESILTELEEIRDKVPGFTGTISDLGGPTANMYRLGCSDPKAEANCRRPSCVFPGICNKLNTDHKHTIDLYRAARQVKGVKKVMIASGVRYDLAIESPEYVKELVTHHVGGYLKIAPEHTEKGPLDLMMKPGMGTYDRFKEMFDKYSQEAGKKQYLIPYFISAHPGTTDEDMLNLALWLKKNNYECDQVQNFYPSPMCNATSMYYSETNPLKRVKYKQREDVPVAKGDRQRRLHKALLRYHDPANWPLIREALITMGKKYLIGDKPGCLVPAEDMDARTPAQRRKSGRHGANRFATKHTSTQPGFPGDKANAGSGKKPTRGGQSNSAPSRSGSATGGKHPQRSGANTGGKSSGGKNSPRAGGRNQPSRAR.

A Radical SAM core domain is found at 363-640 (AYDMIKTSVN…LHKALLRYHD (278 aa)). Positions 377, 381, and 384 each coordinate [4Fe-4S] cluster. The disordered stretch occupies residues 674–768 (DARTPAQRRK…GGRNQPSRAR (95 aa)). Positions 679-689 (AQRRKSGRHGA) are enriched in basic residues. Polar residues predominate over residues 719-731 (GGQSNSAPSRSGS).

The protein belongs to the UPF0313 family. [4Fe-4S] cluster serves as cofactor.

This chain is UPF0313 protein VV1_2212, found in Vibrio vulnificus (strain CMCP6).